We begin with the raw amino-acid sequence, 310 residues long: MPSNNSSFLDIDDDLEGVDDFGNEPNPFDDATVPDSPNMNNSTAGKGSEFYNTTGSKAESAPLQGQMDPPAYDQVIGQNDNDGLGRNGLRPGLINYYSKYFQIDLTQFKKRLSAVLTFRNDHNSESNEDNTDLYGAVWITATVVMINFTMSRGLNFIISDVIEGVKTGEDIDRASQFKKLLHSIWLFYGYTFGVPFITMQVLNRDEHSERNRSFKSVPELISVYGYANLIWIPVCVILNILDMSKRLRTVQAIQWAIVALGWAQSSYFLNSQISSNNNTETQSNGKFSLSIIVVVALHTLFCLLFRFIIF.

Residues 1-84 (MPSNNSSFLD…VIGQNDNDGL (84 aa)) form a disordered region. The span at 10 to 22 (DIDDDLEGVDDFG) shows a compositional bias: acidic residues. Over residues 35–57 (DSPNMNNSTAGKGSEFYNTTGSK) the composition is skewed to polar residues. Residue S60 is modified to Phosphoserine. 5 consecutive transmembrane segments (helical) span residues 131 to 151 (TDLYGAVWITATVVMINFTMS), 181 to 201 (LHSIWLFYGYTFGVPFITMQV), 220 to 240 (LISVYGYANLIWIPVCVILNI), 249 to 269 (TVQAIQWAIVALGWAQSSYFL), and 290 to 310 (SIIVVVALHTLFCLLFRFIIF).

The protein belongs to the YIP1 family. As to quaternary structure, interacts with SNX3, TVP18, TVP23, YIP1 and YIP4. Interacts with SEC4; The C-terminal cysteines in the Rab GTPase SEC4 are essential for the interaction. Interacts with YPT1, YPT6, YPT7, YPT10, YPT11, YPT31, YPT32 and YPT52; These proteins are all Rab GTPases.

The protein resides in the membrane. Its function is as follows. Possible role in vesicle-mediated transport. May be involved in proper membrane localization of Rab GTPases. The protein is Protein YIP5 (YIP5) of Saccharomyces cerevisiae (strain ATCC 204508 / S288c) (Baker's yeast).